A 172-amino-acid chain; its full sequence is MSSSQNNNSSWIDWFLGIKGNQFLCRVPTDYVQDTFNQMGLEYFSEILDVILKPVIDSSSGLLYGDEKKWYGMIHARYIRSERGLIAMHRKYMRGDFGSCPNISCDRQNTLPVGLSAVWGKSTVKIHCPRCKSNFHPKSDTQLDGAMFGPSFPDIFFSLLPNLTSPLDDPRT.

Belongs to the casein kinase 2 subunit beta family. As to quaternary structure, interacts in vitro with the casein kinase 2 alpha subunit (CkII-alpha). The relevance of such interaction is however unclear in vivo. As to expression, probably not expressed in wild-type flies. In males lacking the Y chromosome, it is testis-specific and constitutes the main component of star-shaped crystals.

Its function is as follows. Unknown. In males lacking the Y chromosome, its strong overexpression leads to the appearance of proteinaceous star-shaped crystals in the primary spermatocytes causing meiotic drive, possibly by interfering with normal casein kinase 2 activity. This is Stellate protein CG33237 (Ste:CG33237) from Drosophila melanogaster (Fruit fly).